The following is a 335-amino-acid chain: SAM pointed domain-containing Ets transcription factor (335 aa).

A compositionally biased stretch (low complexity) spans methionine 1 to proline 20. Disordered regions lie at residues methionine 1–arginine 25 and alanine 75–alanine 100. A PNT domain is found at glutamate 129–alanine 213. The ETS DNA-binding region spans isoleucine 249–valine 332.

Belongs to the ETS family. Interacts with the DNA-binding domain of the androgen receptor. Interacts with NKX3-1. Expressed in a very restricted set of primarily hormone-regulated epithelial tissues with particularly high expression in the prostate gland. Significantly lower expression is seen in other hormone regulated tissues such as mammary gland, salivary gland, and ovary. Expressed in prostate carcinoma cells.

Its subcellular location is the nucleus. In terms of biological role, may function as an androgen-independent transactivator of the prostate-specific antigen (PSA) promoter. Binds to 5'-GGAT-3' DNA sequences. May play a role in the regulation of the prostate gland and/or prostate cancer development. Acts as a transcriptional activator for SERPINB5 promoter. In Homo sapiens (Human), this protein is SAM pointed domain-containing Ets transcription factor (SPDEF).